We begin with the raw amino-acid sequence, 178 residues long: SsrA-binding protein (178 aa).

The disordered stretch occupies residues 1-28; that stretch reads MAKKSTPVDSGRSKGKKASAPRGGGPAV.

The protein belongs to the SmpB family.

The protein localises to the cytoplasm. Functionally, required for rescue of stalled ribosomes mediated by trans-translation. Binds to transfer-messenger RNA (tmRNA), required for stable association of tmRNA with ribosomes. tmRNA and SmpB together mimic tRNA shape, replacing the anticodon stem-loop with SmpB. tmRNA is encoded by the ssrA gene; the 2 termini fold to resemble tRNA(Ala) and it encodes a 'tag peptide', a short internal open reading frame. During trans-translation Ala-aminoacylated tmRNA acts like a tRNA, entering the A-site of stalled ribosomes, displacing the stalled mRNA. The ribosome then switches to translate the ORF on the tmRNA; the nascent peptide is terminated with the 'tag peptide' encoded by the tmRNA and targeted for degradation. The ribosome is freed to recommence translation, which seems to be the essential function of trans-translation. The sequence is that of SsrA-binding protein from Corynebacterium urealyticum (strain ATCC 43042 / DSM 7109).